The primary structure comprises 388 residues: Cuticle-degrading protease (388 aa).

An N-terminal signal peptide occupies residues 1–18; that stretch reads MHLSALLTLLPAVLAAPA. Residues 19–107 constitute a propeptide that is removed on maturation; it reads TIGRRAEPAP…IEKDAVMRIS (89 aa). In terms of domain architecture, Inhibitor I9 spans 41-106; the sequence is KYIVKFKDDI…FIEKDAVMRI (66 aa). One can recognise a Peptidase S8 domain in the interval 116–388; that stretch reads PWGLGRISHR…TVNYLAYNGA (273 aa). Cystine bridges form between Cys-143–Cys-233 and Cys-288–Cys-360. Residues Asp-148 and His-179 each act as charge relay system in the active site. An N-linked (GlcNAc...) asparagine glycan is attached at Asn-296. Catalysis depends on Ser-334, which acts as the Charge relay system.

The protein belongs to the peptidase S8 family.

The protein localises to the secreted. Functionally, capable of breaching the insect cuticle. The polypeptide is Cuticle-degrading protease (PR1) (Metarhizium anisopliae (Entomophthora anisopliae)).